Reading from the N-terminus, the 244-residue chain is Phosphoadenosine 5'-phosphosulfate reductase (244 aa).

Cysteine 239 serves as the catalytic Nucleophile; cysteine thiosulfonate intermediate.

The protein belongs to the PAPS reductase family. CysH subfamily.

The protein resides in the cytoplasm. The enzyme catalyses [thioredoxin]-disulfide + sulfite + adenosine 3',5'-bisphosphate + 2 H(+) = [thioredoxin]-dithiol + 3'-phosphoadenylyl sulfate. It functions in the pathway sulfur metabolism; hydrogen sulfide biosynthesis; sulfite from sulfate: step 3/3. Its function is as follows. Catalyzes the formation of sulfite from phosphoadenosine 5'-phosphosulfate (PAPS) using thioredoxin as an electron donor. This chain is Phosphoadenosine 5'-phosphosulfate reductase, found in Zymomonas mobilis subsp. mobilis (strain ATCC 31821 / ZM4 / CP4).